Reading from the N-terminus, the 404-residue chain is Nesprin-4 (404 aa).

2 disordered regions span residues 1 to 91 (MALS…GGKH) and 277 to 347 (GQRG…GAPD). Residues 1 to 355 (MALSLPLGPR…PDPASRQPLT (355 aa)) are Cytoplasmic-facing. A compositionally biased stretch (polar residues) spans 39–52 (EESTSPEQAQTLGQ). Positions 307-320 (HQKRLARHQRHSLL) are enriched in basic residues. The KASH domain maps to 347 to 404 (DPASRQPLTFLLILFLLFLLLVGAMFLLPASGGPCCSHARIPRTPYLVLSYVNGLPPV). The chain crosses the membrane as a helical; Anchor for type IV membrane protein span at residues 356–376 (FLLILFLLFLLLVGAMFLLPA). Topologically, residues 377-404 (SGGPCCSHARIPRTPYLVLSYVNGLPPV) are perinuclear space.

It belongs to the nesprin family. In terms of assembly, core component of LINC complexes which are composed of inner nuclear membrane SUN domain-containing proteins coupled to outer nuclear membrane KASH domain-containing nesprins. SUN and KASH domain-containing proteins seem to bind each other promiscuously; however, differentially expression of LINC complex constituents can give rise to specific assemblies. Probably part of a SUN1-containing LINC complex. Interacts with kinesins KIF5B and KLC1. Post-translationally, the disulfid bond with SUN1 or SUN2 is required for stability of the respective LINC complex under tensile forces.

It localises to the nucleus outer membrane. Its function is as follows. As a component of the LINC (LInker of Nucleoskeleton and Cytoskeleton) complex, involved in the connection between the nuclear lamina and the cytoskeleton. The nucleocytoplasmic interactions established by the LINC complex play an important role in the transmission of mechanical forces across the nuclear envelope and in nuclear movement and positioning. Behaves as a kinesin cargo, providing a functional binding site for kinesin-1 at the nuclear envelope. Hence may contribute to the establishment of secretory epithelial morphology by promoting kinesin-dependent apical migration of the centrosome and Golgi apparatus and basal localization of the nucleus. The protein is Nesprin-4 (SYNE4) of Homo sapiens (Human).